The sequence spans 112 residues: Protein ORF3 (112 aa).

Hydrophobic stretches follow at residues 7–23 and 40–60; these read ALGL…LCCP and AAVV…PIFI. The segment at 28 to 66 is interaction with host HPX; it reads VSRLAVAAGKRGAAVVSGVTGLILSPSPSPIFIQPTPSH. Positions 70–112 are homodimerization, and interaction with host AMBP/bikunin; that stretch reads QPPPGLELALGSQSVHSAPLGVTSPSAPPLPPVVDLPQLGLRR. A disordered region spans residues 89-112; sequence LGVTSPSAPPLPPVVDLPQLGLRR. The segment at 93–102 is interaction with host SRC, HCK, FYN, PIK3R3 and GRB2; that stretch reads SPSAPPLPPV. Residues 94–97 carry the PTAP/PSAP motif motif; that stretch reads PSAP.

The protein belongs to the hepevirus ORF3 protein family. As to quaternary structure, forms homooligomers. Interacts with host SRC, HCK, FYN, PIK3R3 and GRB2 (via SH3 domain); binding does not activate the kinases. Interacts with host AMBP/bikunin and AMBP/alpha-1-microglobulin peptides. Interacts with host HPX/hemopexin. Interacts (when phosphorylated) with capsid protein ORF2. Interacts with host TSG101; this interaction plays a role in viral release from the host cell. Interacts with host SIRPA; this interaction down-regulates the phosphorylation of host IRF3. Post-translationally, palmitoylated in the N-terminus.

It localises to the host endoplasmic reticulum membrane. The protein localises to the host cytoplasm. Its subcellular location is the host cytoskeleton. The protein resides in the virion. It is found in the host cell membrane. Functionally, small multifunctional phosphoprotein involved in virion morphogenesis, egress and counteracting host innate immunity. Plays critical roles in the final steps of viral release by interacting with host TSG101, a member of the vacuolar protein-sorting pathway and using other cellular host proteins involved in vesicle formation pathway. Also acts as a viroporin and forms ion conductive pores allowing viral particle release. Impairs the generation of type I interferon by down-regulating host TLR3 and TLR7 as well as their downstream signaling pathways. Down-regulates the phosphorylation of host IRF3 via the interaction with host SIRP-alpha, thereby inhibiting IFN-I expression. Interacts with host microtubules. The sequence is that of Protein ORF3 from Bandicota bengalensis (lesser bandicoot rat).